We begin with the raw amino-acid sequence, 498 residues long: MEKYILSIDQGTTSSRAILFNQKGEIAGVAQREFKQYFPQSGWVEHDANEIWTSVLAVMTEVINENDVRADQIAGIGITNQRETTVVWDKHTGRPIYHAIVWQSRQTQSICSELKQQGYEQTFRDKTGLLLDPYFAGTKVKWILDNVEGAREKAENGDLLFGTIDTWLVWKLSGKAAHITDYSNASRTLMFNIHDLEWDDELLELLTVPKNMLPEVKPSSEIYGKTIDYHFYGQEVPIAGVAGDQQAALFGQACFECGDVKNTYGTGGFMLMNTGDKAVKSESGLLTTIAYGIDGKVNYALEGSIFVSGSAIQWLRDGLRMINSAPQSESYATRVDSTEGVYVVPAFVGLGTPYWDSEARGAIFGLTRGTEKEHFIRATLESLCYQTRDVMEAMSKDSGIDVQSLRVDGGAVKNNFIMQFQADIVNTSVERPEIQETTALGAAFLAGLAVGFWESKDDIAKNWKLEEKFDPKMDEGEREKLYRGWKKAVEATQVFKTE.

An ADP-binding site is contributed by threonine 12. Threonine 12, threonine 13, and serine 14 together coordinate ATP. Threonine 12 provides a ligand contact to sn-glycerol 3-phosphate. Arginine 16 serves as a coordination point for ADP. Residues arginine 82, glutamate 83, and tyrosine 134 each contribute to the sn-glycerol 3-phosphate site. Arginine 82, glutamate 83, and tyrosine 134 together coordinate glycerol. Histidine 230 carries the post-translational modification Phosphohistidine; by HPr. Aspartate 244 serves as a coordination point for sn-glycerol 3-phosphate. Residues aspartate 244 and glutamine 245 each contribute to the glycerol site. Threonine 266 and glycine 309 together coordinate ADP. ATP contacts are provided by threonine 266, glycine 309, glutamine 313, and glycine 410. Residues glycine 410 and asparagine 414 each contribute to the ADP site.

It belongs to the FGGY kinase family. Homotetramer and homodimer (in equilibrium). Post-translationally, the phosphoenolpyruvate-dependent sugar phosphotransferase system (PTS), including enzyme I, and histidine-containing protein (HPr) are required for the phosphorylation, which leads to the activation of the enzyme.

The catalysed reaction is glycerol + ATP = sn-glycerol 3-phosphate + ADP + H(+). Its pathway is polyol metabolism; glycerol degradation via glycerol kinase pathway; sn-glycerol 3-phosphate from glycerol: step 1/1. Activated by phosphorylation and inhibited by fructose 1,6-bisphosphate (FBP). Its function is as follows. Key enzyme in the regulation of glycerol uptake and metabolism. Catalyzes the phosphorylation of glycerol to yield sn-glycerol 3-phosphate. The sequence is that of Glycerol kinase from Staphylococcus aureus (strain Mu50 / ATCC 700699).